The primary structure comprises 242 residues: 1-(5-phosphoribosyl)-5-[(5-phosphoribosylamino)methylideneamino] imidazole-4-carboxamide isomerase (242 aa).

Residue Asp-8 is the Proton acceptor of the active site. The active-site Proton donor is Asp-129.

This sequence belongs to the HisA/HisF family.

The protein resides in the cytoplasm. It catalyses the reaction 1-(5-phospho-beta-D-ribosyl)-5-[(5-phospho-beta-D-ribosylamino)methylideneamino]imidazole-4-carboxamide = 5-[(5-phospho-1-deoxy-D-ribulos-1-ylimino)methylamino]-1-(5-phospho-beta-D-ribosyl)imidazole-4-carboxamide. Its pathway is amino-acid biosynthesis; L-histidine biosynthesis; L-histidine from 5-phospho-alpha-D-ribose 1-diphosphate: step 4/9. The chain is 1-(5-phosphoribosyl)-5-[(5-phosphoribosylamino)methylideneamino] imidazole-4-carboxamide isomerase from Dictyoglomus thermophilum (strain ATCC 35947 / DSM 3960 / H-6-12).